A 139-amino-acid polypeptide reads, in one-letter code: Putative pre-16S rRNA nuclease (139 aa).

This sequence belongs to the YqgF nuclease family.

The protein resides in the cytoplasm. Functionally, could be a nuclease involved in processing of the 5'-end of pre-16S rRNA. In Streptococcus equi subsp. equi (strain 4047), this protein is Putative pre-16S rRNA nuclease.